A 72-amino-acid chain; its full sequence is Protein CYSTEINE-RICH TRANSMEMBRANE MODULE 9 (72 aa).

Over residues M1–Y22 the composition is skewed to polar residues. Positions M1 to E46 are disordered. Residues S49–C65 traverse the membrane as a helical segment.

This sequence belongs to the CYSTM1 family. In terms of assembly, heterodimers. Interacts with WIH1/CYSTM13. Mostly expressed in roots and flowers and, to a lower extent, in stems, siliques and leaves.

The protein resides in the cell membrane. It localises to the nucleus. Its function is as follows. Involved in resistance to abiotic stress. This is Protein CYSTEINE-RICH TRANSMEMBRANE MODULE 9 from Arabidopsis thaliana (Mouse-ear cress).